Consider the following 886-residue polypeptide: Cytosolic carboxypeptidase-like protein 5 (886 aa).

One can recognise a Peptidase M14 domain in the interval 157-570 (YPFSYSDCQE…AMAIAALDMA (414 aa)). Zn(2+) is bound by residues His252 and Glu255. Positions 344–354 (SQSSSEHQPSS) are enriched in low complexity. The interval 344 to 364 (SQSSSEHQPSSCLPPDAPVSD) is disordered. A Zn(2+)-binding site is contributed by His434. Residue Glu516 is the Proton donor/acceptor of the active site. 2 disordered regions span residues 605-734 (STLN…SSHK) and 784-848 (LQAR…FSPI). Polar residues predominate over residues 631–640 (CSENTLSRAR). The span at 641-666 (SFSTGTSAGGSSSSQQNSPQMKNSPS) shows a compositional bias: low complexity. Residues 696–705 (REPRSQDRRR) are compositionally biased toward basic and acidic residues. Over residues 714 to 732 (PAGSLAPSPAPTSSGPASS) the composition is skewed to low complexity. Ser841 is subject to Phosphoserine.

It belongs to the peptidase M14 family. Requires Zn(2+) as cofactor. In terms of tissue distribution, expressed in brain.

It is found in the cytoplasm. It localises to the cytosol. The protein localises to the nucleus. The protein resides in the cytoskeleton. Its subcellular location is the spindle. It is found in the midbody. The enzyme catalyses gamma-L-glutamyl-L-glutamyl-[protein] + H2O = L-glutamyl-[protein] + L-glutamate. The catalysed reaction is (L-glutamyl)(n+1)-gamma-L-glutamyl-L-glutamyl-[protein] + H2O = (L-glutamyl)(n)-gamma-L-glutamyl-L-glutamyl-[protein] + L-glutamate. It carries out the reaction C-terminal L-alpha-aminoacyl-L-glutamyl-[tubulin] + H2O = C-terminal L-alpha-aminoacyl-[tubulin] + L-glutamate. It catalyses the reaction C-terminal L-alpha-aminoacyl-L-glutamyl-L-glutamyl-[tubulin] + H2O = C-terminal L-alpha-aminoacyl-L-glutamyl-[tubulin] + L-glutamate. Functionally, metallocarboxypeptidase that mediates deglutamylation of tubulin and non-tubulin target proteins. Catalyzes the removal of polyglutamate side chains present on the gamma-carboxyl group of glutamate residues within the C-terminal tail of alpha- and beta-tubulin. Cleaves alpha- and gamma-linked polyglutamate tubulin side-chain, as well as the branching point glutamate. Also catalyzes the removal of alpha-linked glutamate residues from the carboxy-terminus of alpha-tubulin. Mediates deglutamylation of nucleotidyltransferase CGAS, leading to CGAS antiviral defense response activation. In Homo sapiens (Human), this protein is Cytosolic carboxypeptidase-like protein 5.